A 210-amino-acid polypeptide reads, in one-letter code: MATRSKSSQRWLKEHFSDPFVKKAQAEGMRSRAAYKLEELLERDRLLKPHMVVVDLGAAPGGWSQQVRRQIGDTGRVLALDILDMPPLAGVEFLHGDFREETVLSQFEAMLGDQPVDLVLSDMAPNKSGVGAVDQPRMMHLAELALDFADNHLKTGGAFLIKLFQGEGFDDYVRDMRRRYDKVSIRKPEASRKRSPEVYALGQGKRAHMK.

Gly-61, Trp-63, Asp-81, Asp-97, and Asp-122 together coordinate S-adenosyl-L-methionine. The active-site Proton acceptor is Lys-162. A compositionally biased stretch (basic and acidic residues) spans 187–196; it reads KPEASRKRSP. Residues 187–210 form a disordered region; it reads KPEASRKRSPEVYALGQGKRAHMK.

It belongs to the class I-like SAM-binding methyltransferase superfamily. RNA methyltransferase RlmE family.

The protein localises to the cytoplasm. The enzyme catalyses uridine(2552) in 23S rRNA + S-adenosyl-L-methionine = 2'-O-methyluridine(2552) in 23S rRNA + S-adenosyl-L-homocysteine + H(+). Its function is as follows. Specifically methylates the uridine in position 2552 of 23S rRNA at the 2'-O position of the ribose in the fully assembled 50S ribosomal subunit. This Stenotrophomonas maltophilia (strain R551-3) protein is Ribosomal RNA large subunit methyltransferase E.